A 125-amino-acid polypeptide reads, in one-letter code: Large ribosomal subunit protein bL12 (125 aa).

It belongs to the bacterial ribosomal protein bL12 family. Homodimer. Part of the ribosomal stalk of the 50S ribosomal subunit. Forms a multimeric L10(L12)X complex, where L10 forms an elongated spine to which 2 to 4 L12 dimers bind in a sequential fashion. Binds GTP-bound translation factors.

Forms part of the ribosomal stalk which helps the ribosome interact with GTP-bound translation factors. Is thus essential for accurate translation. The chain is Large ribosomal subunit protein bL12 from Azorhizobium caulinodans (strain ATCC 43989 / DSM 5975 / JCM 20966 / LMG 6465 / NBRC 14845 / NCIMB 13405 / ORS 571).